Consider the following 279-residue polypeptide: Secreted RxLR effector protein 90 (279 aa).

Residues 1–19 (MKSAAAFATFLTLSVFVAT) form the signal peptide. The RxLR-dEER motif lies at 29–46 (RGLRSLADNQSTESSEGR). 2 disordered regions span residues 29 to 53 (RGLR…YNHH) and 135 to 176 (ATPA…NLAG). N-linked (GlcNAc...) asparagine glycosylation is present at Asn-37. Residues 135–146 (ATPAPTTSVPSS) are compositionally biased toward low complexity. The span at 147 to 163 (LVNTDTSDNQLPTTPVA) shows a compositional bias: polar residues. The segment covering 166–176 (QGGGIGSNLAG) has biased composition (gly residues). Asn-217 carries N-linked (GlcNAc...) asparagine glycosylation.

This sequence belongs to the RxLR effector family.

The protein resides in the secreted. The protein localises to the host cell membrane. Secreted effector that completely suppresses the host cell death induced by cell death-inducing proteins. This Plasmopara viticola (Downy mildew of grapevine) protein is Secreted RxLR effector protein 90.